The primary structure comprises 113 residues: Small ribosomal subunit protein bS16 (113 aa).

The interval Pro-84 to Ala-113 is disordered.

It belongs to the bacterial ribosomal protein bS16 family.

This is Small ribosomal subunit protein bS16 from Gluconacetobacter diazotrophicus (strain ATCC 49037 / DSM 5601 / CCUG 37298 / CIP 103539 / LMG 7603 / PAl5).